The chain runs to 100 residues: Large ribosomal subunit protein uL23 (100 aa).

The protein belongs to the universal ribosomal protein uL23 family. In terms of assembly, part of the 50S ribosomal subunit. Contacts protein L29, and trigger factor when it is bound to the ribosome.

Functionally, one of the early assembly proteins it binds 23S rRNA. One of the proteins that surrounds the polypeptide exit tunnel on the outside of the ribosome. Forms the main docking site for trigger factor binding to the ribosome. This chain is Large ribosomal subunit protein uL23, found in Prochlorococcus marinus (strain MIT 9312).